Reading from the N-terminus, the 104-residue chain is Large ribosomal subunit protein uL24 (104 aa).

Belongs to the universal ribosomal protein uL24 family. In terms of assembly, part of the 50S ribosomal subunit.

Functionally, one of two assembly initiator proteins, it binds directly to the 5'-end of the 23S rRNA, where it nucleates assembly of the 50S subunit. Its function is as follows. One of the proteins that surrounds the polypeptide exit tunnel on the outside of the subunit. The polypeptide is Large ribosomal subunit protein uL24 (Shewanella loihica (strain ATCC BAA-1088 / PV-4)).